An 801-amino-acid chain; its full sequence is Elongation factor G, mitochondrial (801 aa).

A mitochondrion-targeting transit peptide spans 1–24; sequence MRCPSLARLPHRAISGLTRLPVRL. Residues 99 to 386 form the tr-type G domain; the sequence is SRIRNIGIAA…GVIDYLPNPS (288 aa). Residues 108–115, 184–188, and 238–241 contribute to the GTP site; these read AHIDSGKT, DTPGH, and NKMD.

The protein belongs to the TRAFAC class translation factor GTPase superfamily. Classic translation factor GTPase family. EF-G/EF-2 subfamily.

Its subcellular location is the mitochondrion. Its pathway is protein biosynthesis; polypeptide chain elongation. Its function is as follows. Mitochondrial GTPase that catalyzes the GTP-dependent ribosomal translocation step during translation elongation. During this step, the ribosome changes from the pre-translocational (PRE) to the post-translocational (POST) state as the newly formed A-site-bound peptidyl-tRNA and P-site-bound deacylated tRNA move to the P and E sites, respectively. Catalyzes the coordinated movement of the two tRNA molecules, the mRNA and conformational changes in the ribosome. The sequence is that of Elongation factor G, mitochondrial (mef1) from Aspergillus clavatus (strain ATCC 1007 / CBS 513.65 / DSM 816 / NCTC 3887 / NRRL 1 / QM 1276 / 107).